The primary structure comprises 280 residues: MTNIHPTAIVEDGARIGNNVTIEPYAIVKKNVTLCDDVVVKSYAYIDGFTTIGRGTTVWPSAMIGNKPQDLKFKGEKTFVEIGEHCEIREFAMITSSTFEGTTVSIGNNCLIMPWAHIAHNCSVGNNVVFSTHVQLAGHVQVGDCVTIGSMVGVHQFVRIGSYSMVGAMSGIRRDIPPFTIGTGNPYALGGINKVGLQRRQVSFETRLALIKTFKRVFRSDESFQASLESVLEDFGEVPEVRHFVEFCRQPSKRGIERGVDCEASLEEPIDKKEGAFVES.

Belongs to the transferase hexapeptide repeat family. LpxA subfamily. As to quaternary structure, homotrimer.

The protein resides in the cytoplasm. It catalyses the reaction a (3R)-hydroxyacyl-[ACP] + UDP-N-acetyl-alpha-D-glucosamine = a UDP-3-O-[(3R)-3-hydroxyacyl]-N-acetyl-alpha-D-glucosamine + holo-[ACP]. It functions in the pathway glycolipid biosynthesis; lipid IV(A) biosynthesis; lipid IV(A) from (3R)-3-hydroxytetradecanoyl-[acyl-carrier-protein] and UDP-N-acetyl-alpha-D-glucosamine: step 1/6. In terms of biological role, involved in the biosynthesis of lipid A, a phosphorylated glycolipid that anchors the lipopolysaccharide to the outer membrane of the cell. This is Acyl-[acyl-carrier-protein]--UDP-N-acetylglucosamine O-acyltransferase from Chlamydia trachomatis serovar A (strain ATCC VR-571B / DSM 19440 / HAR-13).